The following is a 270-amino-acid chain: Chymotrypsin-like elastase family member 3B (270 aa).

A signal peptide (or 16) is located at residues 1–15 (MMLRLLSSLLLVAVA). Residues 16–28 (SGYGPPSSRPSSR) constitute a propeptide, activation peptide. The region spanning 29 to 268 (VVNGEDAVPY…FIDWIEETIA (240 aa)) is the Peptidase S1 domain. C58 and C74 are oxidised to a cystine. Residue H73 is the Charge relay system of the active site. An N-linked (GlcNAc...) asparagine glycan is attached at N114. A disulfide bridge connects residues C117 and C120. Catalysis depends on D123, which acts as the Charge relay system. 3 disulfide bridges follow: C157/C223, C188/C204, and C213/C244. S217 serves as the catalytic Charge relay system.

This sequence belongs to the peptidase S1 family. Elastase subfamily. In terms of tissue distribution, pancreas. Not detectable in keratinocytes.

The enzyme catalyses Preferential cleavage: Ala-|-Xaa. Does not hydrolyze elastin.. Its function is as follows. Efficient protease with alanine specificity but only little elastolytic activity. This chain is Chymotrypsin-like elastase family member 3B (CELA3B), found in Homo sapiens (Human).